The sequence spans 122 residues: Atrial gland peptide B (122 aa).

An N-terminal signal peptide occupies residues 1 to 21; the sequence is MKANTMFIILCLTLSTLCVSS. Positions 22–34 are excised as a propeptide; that stretch reads QFTSVLGKIFVTN. Ile69 bears the Isoleucine amide mark. The propeptide occupies 73–122; that stretch reads AAGGMEQSEGQNPETKSHSWRERSVLTPSLLSLGESLESGISKRISINQD. Residues 74 to 95 form a disordered region; it reads AGGMEQSEGQNPETKSHSWRER.

The protein belongs to the molluscan ELH family.

Its subcellular location is the secreted. In terms of biological role, the atrial gland peptide A and peptide B precursors are the source of the 2 peptides that, upon release from this reproductive system gland, initiate the egg-laying process by exciting the bag cell neurons. These neurons, clustered in neural connectives near the abdominal ganglion, in turn release other peptides that act directly on the ganglion and also, via the circulating hemolymph, on many other organs to control the physiological processes of egg-laying. One of these other peptides is the egg-laying hormone. The polypeptide is Atrial gland peptide B (Aplysia californica (California sea hare)).